The chain runs to 623 residues: MSTSSSDPFFNFAKSSFRSAAAQKASASSLPPLPGPDKKVPGMDIKYDVVIVGSGPIGCTYARELVGAGYKVAMFDIGEIDSGLKIGAHKKNTVEYQKNIDKFVNVIQGQLMSVSVPVNTLVVDTLSPTSWQASTFFVRNGSNPEQDPLRNLSGQAVTRVVGGMSTHWTCATPRFDREQRPLLVKDDADADDAEWDRLYTKAESYFQTGTDQFKESIRHNLVLNKLAEEYKGQRDFQQIPLAATRRSPTFVEWSSANTVFDLQNRPNTDAPEERFNLFPAVACERVVRNALNSEIESLHIHDLISGDRFEIKADVYVLTAGAVHNTQLLVNSGFGQLGRPNPTNPPELLPSLGSYITEQSLVFCQTVMSTELIDSVKSDMTIRGTPGELTYSVTYTPGASTNKHPDWWNEKVKNHMMQHQEDPLPIPFEDPEPQVTTLFQPSHPWHTQIHRDAFSYGAVQQSIDSRLIVDWRFFGRTEPKEENKLWFSDKITDAYNMPQPTFDFRFPAGRTSKEAEDMMTDMCVMSAKIGGFLPGSLPQFMEPGLVLHLGGTHRMGFDEKEDNCCVNTDSRVFGFKNLFLGGCGNIPTAYGANPTLTAMSLAIKSCEYIKQNFTPSPFTSEAQ.

A signal peptide spans 1–28; it reads MSTSSSDPFFNFAKSSFRSAAAQKASAS. Residues 29–38 constitute a propeptide that is removed on maturation; the sequence is SLPPLPGPDK. Histidine 167 carries the post-translational modification Tele-8alpha-FAD histidine. The substrate site is built by glutamine 448 and histidine 450. Histidine 548 acts as the Proton acceptor in catalysis. Asparagine 593 is an active-site residue.

This sequence belongs to the GMC oxidoreductase family. Homotetramer. FAD is required as a cofactor.

The protein localises to the periplasm. It carries out the reaction D-glucose + O2 = 2-dehydro-D-glucose + H2O2. Functionally, catalyzes the oxidation of various aldopyranoses and disaccharides on carbon-2 to the corresponding 2-keto sugars concomitant with the reduction of O(2) to H(2)O(2). Plays an important role in lignin degradation of wood rot fungi by supplying the essential cosubstrate H(2)O(2) for the ligninolytic peroxidases, lignin peroxidase and manganese-dependent peroxidase. This chain is Pyranose 2-oxidase (p2ox), found in Peniophora sp. (strain SG) (White-rot fungus).